The chain runs to 272 residues: 2-dehydro-3-deoxyphosphooctonate aldolase (272 aa).

Belongs to the KdsA family.

The protein resides in the cytoplasm. It carries out the reaction D-arabinose 5-phosphate + phosphoenolpyruvate + H2O = 3-deoxy-alpha-D-manno-2-octulosonate-8-phosphate + phosphate. Its pathway is carbohydrate biosynthesis; 3-deoxy-D-manno-octulosonate biosynthesis; 3-deoxy-D-manno-octulosonate from D-ribulose 5-phosphate: step 2/3. It functions in the pathway bacterial outer membrane biogenesis; lipopolysaccharide biosynthesis. The protein is 2-dehydro-3-deoxyphosphooctonate aldolase of Geotalea daltonii (strain DSM 22248 / JCM 15807 / FRC-32) (Geobacter daltonii).